A 239-amino-acid polypeptide reads, in one-letter code: Putative transcriptional regulator of 2-aminoethylphosphonate degradation operons (239 aa).

An HTH gntR-type domain is found at 8 to 76 (IPQYLLIKAQ…DRRGWFVTPE (69 aa)). Positions 36-55 (ERELCAIFNTTRITIRESLA) form a DNA-binding region, H-T-H motif.

The protein is Putative transcriptional regulator of 2-aminoethylphosphonate degradation operons (phnR) of Salmonella paratyphi A (strain ATCC 9150 / SARB42).